The following is a 259-amino-acid chain: Glutamate 5-kinase (259 aa).

Lys18 serves as a coordination point for ATP. Ser54, Asp141, and Asn153 together coordinate substrate. 173 to 174 provides a ligand contact to ATP; the sequence is SD.

Belongs to the glutamate 5-kinase family.

The protein localises to the cytoplasm. The catalysed reaction is L-glutamate + ATP = L-glutamyl 5-phosphate + ADP. Its pathway is amino-acid biosynthesis; L-proline biosynthesis; L-glutamate 5-semialdehyde from L-glutamate: step 1/2. Functionally, catalyzes the transfer of a phosphate group to glutamate to form L-glutamate 5-phosphate. This Clavibacter sepedonicus (Clavibacter michiganensis subsp. sepedonicus) protein is Glutamate 5-kinase.